Consider the following 322-residue polypeptide: Putative pyruvyl transferase EpsO (322 aa).

It belongs to the polysaccharide pyruvyl transferase family.

In terms of biological role, may be involved in the production of the exopolysaccharide (EPS) component of the extracellular matrix during biofilm formation. EPS is responsible for the adhesion of chains of cells into bundles. This Bacillus subtilis (strain 168) protein is Putative pyruvyl transferase EpsO (epsO).